We begin with the raw amino-acid sequence, 182 residues long: UPF0397 protein BcerKBAB4_2500 (182 aa).

5 helical membrane passes run 9–29 (VVAIGIGAALYGVLGLWGFSI), 40–60 (AILTVFGALFGPVAGLLIGLI), 71–91 (WGIWWGWVISSGIIGLAMGLI), 114–134 (IAGLIGIVIAIIFAGSFDIIV), and 142–162 (IVIQVLGATIADVIVFLVLGL).

This sequence belongs to the UPF0397 family.

It is found in the cell membrane. The protein is UPF0397 protein BcerKBAB4_2500 of Bacillus mycoides (strain KBAB4) (Bacillus weihenstephanensis).